Consider the following 431-residue polypeptide: 3'3'-cGAMP-specific phosphodiesterase 1 (431 aa).

Residues 39 to 155 (DINHGHRVGY…IFLADRVDYL (117 aa)) form the HD domain. The region spanning 231–427 (GVEEIMSIAM…YYQLSIAESP (197 aa)) is the HD-GYP domain. A divalent metal cation-binding residues include histidine 288 and aspartate 289. The active-site Proton donor is the lysine 292. A divalent metal cation-binding residues include histidine 317, histidine 341, histidine 342, and aspartate 370.

As to quaternary structure, monomer. Ca(2+) serves as cofactor. Requires Mg(2+) as cofactor.

The enzyme catalyses 3',3'-cGAMP + H2O = 5'-pApG-3' + H(+). It catalyses the reaction 5'-pApG-3' + H2O = 5'-ApG-3' + phosphate. Phosphodiesterase (PDE) that catalyzes the hydrolysis of 3'3'-cyclic GMP-AMP (3'3'-cGAMP), leading to linear 5'-pApG. Also displays 5'-nucleotidase activity, further hydrolyzing 5'-pApG to 5'-ApG. Counteracts the function of the 3'3'-cGAMP synthase DncV, and is involved in the modulation of intracellular 3'3'-cGAMP levels. Enhances bacterial chemotaxis and inhibits intestinal colonization in vivo. Thus exerts a crucial role in regulating bacterial infectivity through catalyzing 3'3'-cGAMP degradation. Is specific for 3'3'-cGAMP since it cannot degrade other cGAMP linkage isomers (3'2'-, 2'3'-, and 2'2'-cGAMPs). Is also able to hydrolyze c-di-GMP but not c-di-AMP. The sequence is that of 3'3'-cGAMP-specific phosphodiesterase 1 from Vibrio cholerae serotype O1 (strain ATCC 39315 / El Tor Inaba N16961).